The sequence spans 1372 residues: DNA-directed RNA polymerase subunit beta (1372 aa).

This sequence belongs to the RNA polymerase beta chain family. The RNAP catalytic core consists of 2 alpha, 1 beta, 1 beta' and 1 omega subunit. When a sigma factor is associated with the core the holoenzyme is formed, which can initiate transcription.

The catalysed reaction is RNA(n) + a ribonucleoside 5'-triphosphate = RNA(n+1) + diphosphate. In terms of biological role, DNA-dependent RNA polymerase catalyzes the transcription of DNA into RNA using the four ribonucleoside triphosphates as substrates. The chain is DNA-directed RNA polymerase subunit beta from Nitratidesulfovibrio vulgaris (strain ATCC 29579 / DSM 644 / CCUG 34227 / NCIMB 8303 / VKM B-1760 / Hildenborough) (Desulfovibrio vulgaris).